A 718-amino-acid polypeptide reads, in one-letter code: Catalase-peroxidase (718 aa).

Residues 98–219 constitute a cross-link (tryptophyl-tyrosyl-methioninium (Trp-Tyr) (with M-245)); it reads WHAAGTYRMG…LAATEMGLIY (122 aa). The active-site Proton acceptor is the His99. The segment at residues 219-245 is a cross-link (tryptophyl-tyrosyl-methioninium (Tyr-Met) (with W-98)); that stretch reads YVNPEGPQASGDPRSAAPFIRATFGNM. His260 contacts heme b.

It belongs to the peroxidase family. Peroxidase/catalase subfamily. As to quaternary structure, homodimer or homotetramer. Requires heme b as cofactor. In terms of processing, formation of the three residue Trp-Tyr-Met cross-link is important for the catalase, but not the peroxidase activity of the enzyme.

The catalysed reaction is H2O2 + AH2 = A + 2 H2O. The enzyme catalyses 2 H2O2 = O2 + 2 H2O. Functionally, bifunctional enzyme with both catalase and broad-spectrum peroxidase activity. The sequence is that of Catalase-peroxidase from Acinetobacter baumannii (strain ACICU).